The primary structure comprises 215 residues: BAG family molecular chaperone regulator 5, mitochondrial (215 aa).

Residues methionine 1 to threonine 14 constitute a mitochondrion transit peptide. In terms of domain architecture, IQ spans alanine 50 to glutamate 79. Residues lysine 72–serine 149 enclose the BAG domain.

In terms of assembly, binds to the ATPase domain of HSP70/HSC70 chaperones. Interacts with HSP70-1.

Its subcellular location is the mitochondrion. Functionally, co-chaperone that regulates diverse cellular pathways, such as programmed cell death and stress responses. This Arabidopsis thaliana (Mouse-ear cress) protein is BAG family molecular chaperone regulator 5, mitochondrial (BAG5).